The primary structure comprises 174 residues: Mating-type protein ALPHA2 (174 aa).

The homeobox; TALE-type DNA-binding region spans 108–170 (QPYRGHRFTK…NRRRKQKHPP (63 aa)).

Belongs to the TALE/M-ATYP homeobox family. In terms of assembly, forms a heterodimer with A1.

Its subcellular location is the nucleus. In terms of biological role, mating type proteins are sequence specific DNA-binding proteins that act as master switches in yeast differentiation by controlling gene expression in a cell type-specific fashion. Transcriptional corepressor that acts in conjunction with A1 to repress transcription of haploid-specific genes and of MATALPHA1. In Nakaseomyces delphensis (Yeast), this protein is Mating-type protein ALPHA2 (MATALPHA2).